The sequence spans 72 residues: Small, acid-soluble spore protein C (72 aa).

This sequence belongs to the alpha/beta-type SASP family.

In terms of biological role, SASP are bound to spore DNA. They are double-stranded DNA-binding proteins that cause DNA to change to an a-like conformation. They protect the DNA backbone from chemical and enzymatic cleavage and are thus involved in dormant spore's high resistance to UV light. This Bacillus subtilis (strain 168) protein is Small, acid-soluble spore protein C (sspC).